Here is a 406-residue protein sequence, read N- to C-terminus: MTFSVDKVRADFPVLSREVNGLPLAYLDSAASAQKPSQVIDAEAEFYRHGYAAVHRGIHTLSAQATEKMENVRKRASLFINARSAEELVFVRGTTEGINLVANSWGNSNVRAGDNIIISQMEHHANIVPWQMLCARVGAELRVIPLNPDGTLQLETLPTLFDEKTRLLAITHVSNVLGTENPLVEMITLAHQHGAKVLVDGAQAVMHHPVDVQALDCDFYVFSGHKLYGPTGIGILYVKEALLQEMPPWEGGGSMIATVSLSEGTTWTKAPWRFEAGTPNTGGIIGLGAALEYVSALGLNNIAEYEQNLMHYALSQLESVPDLTLYGPQNRLGVIAFNLGKHHAYDVGSFLDNYGIAVRTGHHCAMPLMAYYNVPAMCRASLAMYNTHEEVDRLVTGLQRIHRLLG.

At lysine 226 the chain carries N6-(pyridoxal phosphate)lysine. Cysteine 364 (cysteine persulfide intermediate) is an active-site residue.

It belongs to the class-V pyridoxal-phosphate-dependent aminotransferase family. Csd subfamily. As to quaternary structure, homodimer. Interacts with SufE and the SufBCD complex composed of SufB, SufC and SufD. The interaction with SufE is required to mediate the direct transfer of the sulfur atom from the S-sulfanylcysteine. Pyridoxal 5'-phosphate serves as cofactor.

It is found in the cytoplasm. The enzyme catalyses (sulfur carrier)-H + L-cysteine = (sulfur carrier)-SH + L-alanine. The catalysed reaction is L-selenocysteine + AH2 = hydrogenselenide + L-alanine + A + H(+). The protein operates within cofactor biosynthesis; iron-sulfur cluster biosynthesis. Its function is as follows. Cysteine desulfurases mobilize the sulfur from L-cysteine to yield L-alanine, an essential step in sulfur metabolism for biosynthesis of a variety of sulfur-containing biomolecules. Component of the suf operon, which is activated and required under specific conditions such as oxidative stress and iron limitation. Acts as a potent selenocysteine lyase in vitro, that mobilizes selenium from L-selenocysteine. Selenocysteine lyase activity is however unsure in vivo. This is Cysteine desulfurase from Escherichia fergusonii (strain ATCC 35469 / DSM 13698 / CCUG 18766 / IAM 14443 / JCM 21226 / LMG 7866 / NBRC 102419 / NCTC 12128 / CDC 0568-73).